We begin with the raw amino-acid sequence, 624 residues long: Double-stranded RNA-binding protein Staufen homolog 2 (624 aa).

5 consecutive DRBM domains span residues 55–122 (STSI…NGLA), 142–228 (QRAN…SEIS), 254–321 (MKSF…PEYG), 354–422 (RRRE…IADQ), and 540–604 (LTCL…EKAD). The segment at 197 to 223 (LRNEPIPERSSLNGEANRGPEEDKDAN) is disordered. Over residues 214–223 (RGPEEDKDAN) the composition is skewed to basic and acidic residues. Disordered regions lie at residues 401-428 (EKTGKRGENPDWDEQNSGIADQTSTPKG) and 592-624 (PFEQAKLRGEKADNKQANSGTIAQDCKDSKAVV). Positions 415 to 426 (QNSGIADQTSTP) are enriched in polar residues. The segment covering 596–605 (AKLRGEKADN) has biased composition (basic and acidic residues).

RNA-binding protein required for the microtubule-dependent transport of RNAs within polarized cell types. This is Double-stranded RNA-binding protein Staufen homolog 2 (stau2) from Xenopus tropicalis (Western clawed frog).